The chain runs to 1004 residues: Kinesin-like protein KIN-7I (1004 aa).

The 321-residue stretch at 6–326 folds into the Kinesin motor domain; it reads KILVSVRVRP…LLFATCAKEV (321 aa). Residue 89–96 coordinates ATP; it reads GQTSSGKT. Coiled coils occupy residues 335–402, 517–576, and 634–661; these read VVSE…AQSR, KKEY…QKQS, and SVEKEDTKKNLSSKKEDLKQNLSMDQSE. 3 disordered regions span residues 567–599, 628–671, and 802–830; these read EQSVEKQKQSPKKEEMEQYLSRDMSEQVTKSLP, SQQT…PEDE, and TMQHHSTHSDDTDTKTMKPENTDDGGEKT. Composition is skewed to basic and acidic residues over residues 569-582 and 634-652; these read SVEKQKQSPKKEEM and SVEKEDTKKNLSSKKEDLK. Over residues 653–663 the composition is skewed to polar residues; the sequence is QNLSMDQSEQL. K881 participates in a covalent cross-link: Glycyl lysine isopeptide (Lys-Gly) (interchain with G-Cter in ubiquitin).

This sequence belongs to the TRAFAC class myosin-kinesin ATPase superfamily. Kinesin family. KIN-7 subfamily.

This is Kinesin-like protein KIN-7I from Arabidopsis thaliana (Mouse-ear cress).